The chain runs to 163 residues: Crossover junction endodeoxyribonuclease RuvC (163 aa).

Residues Asp-9, Glu-76, and Asp-148 contribute to the active site. Residues Asp-9, Glu-76, and Asp-148 each contribute to the Mg(2+) site.

It belongs to the RuvC family. As to quaternary structure, homodimer which binds Holliday junction (HJ) DNA. The HJ becomes 2-fold symmetrical on binding to RuvC with unstacked arms; it has a different conformation from HJ DNA in complex with RuvA. In the full resolvosome a probable DNA-RuvA(4)-RuvB(12)-RuvC(2) complex forms which resolves the HJ. Mg(2+) serves as cofactor.

The protein resides in the cytoplasm. It carries out the reaction Endonucleolytic cleavage at a junction such as a reciprocal single-stranded crossover between two homologous DNA duplexes (Holliday junction).. The RuvA-RuvB-RuvC complex processes Holliday junction (HJ) DNA during genetic recombination and DNA repair. Endonuclease that resolves HJ intermediates. Cleaves cruciform DNA by making single-stranded nicks across the HJ at symmetrical positions within the homologous arms, yielding a 5'-phosphate and a 3'-hydroxyl group; requires a central core of homology in the junction. The consensus cleavage sequence is 5'-(A/T)TT(C/G)-3'. Cleavage occurs on the 3'-side of the TT dinucleotide at the point of strand exchange. HJ branch migration catalyzed by RuvA-RuvB allows RuvC to scan DNA until it finds its consensus sequence, where it cleaves and resolves the cruciform DNA. The protein is Crossover junction endodeoxyribonuclease RuvC of Trichodesmium erythraeum (strain IMS101).